Here is a 778-residue protein sequence, read N- to C-terminus: MEPRQLFSDPTADPISTAGAASNALSCASFNLPEGGILQLPNGEIITLSAPAAFKPPSCNLALRSVPNIIASGGVVGGTASGTMGLKADDDSHFSDWRDPFYASTFPQCYALAATTIIAYTLVIMLFITPRSFLDGGVVVLGRKGFTNGGGGTSIGGRPWLQKVAALSVAISLTIANAATFRAAEQQYSWGVQNAKQLQEDVLGGAELKIIRIISDTFLWLAQAQTLIRLFPRQREKVIIKWTAFALITLDVIFQSLNSFKYGGSDLTRPKFTEAVPALSYLFALALGVLYAAWVLYYSIMKKRYAFYHPLMKNMILVAVLSVVSILVPVVFFILDISKPDFAGWGDYVRWVGAAAASVIVWEWVERIEALEREEKKDGILGREVFDGDEMLEASQSEHAWPKMKRKGSGGSDSQDTESGGGGKDGGPSLSRFGAWSKISTLTSKHRTEPSSRNEPNEGSSPVAETTNDDERPRFLSPPLWPARPTPAATPVSRTDTTSAASTMYAVRYHTMTELTSYGTPPPTRNMGRLSGSESRGSSRHRDYGSASPGSAPAQDARSTQNSHVGAKASSAGSRWHALTPTVSSRDFVTRSEPRSSKMQRDENSRWDLRARVEEFAATQAENLREKFRPTLDTNNLPVTVIPAPPRRGAAIAQLCEEEELNHSSREGTVREESRNSNASGTVIAVGGAQTPIQTSFSPPPRAANSSMSTAQMPRPQLSPIVTQGSFTNNRYNHLPVTVIPAPPRQDPARAPSQPQSPSLVALGKQPARSDSSTTPSP.

Residues 1–108 are Extracellular-facing; sequence MEPRQLFSDP…DPFYASTFPQ (108 aa). Residues 109 to 129 traverse the membrane as a helical segment; that stretch reads CYALAATTIIAYTLVIMLFIT. Residues 130-160 lie on the Periplasmic side of the membrane; the sequence is PRSFLDGGVVVLGRKGFTNGGGGTSIGGRPW. Residues 161–181 form a helical membrane-spanning segment; that stretch reads LQKVAALSVAISLTIANAATF. The Extracellular segment spans residues 182–201; it reads RAAEQQYSWGVQNAKQLQED. A helical membrane pass occupies residues 202-222; the sequence is VLGGAELKIIRIISDTFLWLA. Residues 223 to 237 are Periplasmic-facing; the sequence is QAQTLIRLFPRQREK. A helical membrane pass occupies residues 238-258; it reads VIIKWTAFALITLDVIFQSLN. Residues 259–275 are Extracellular-facing; the sequence is SFKYGGSDLTRPKFTEA. Residues 276–296 form a helical membrane-spanning segment; sequence VPALSYLFALALGVLYAAWVL. Over 297–314 the chain is Periplasmic; sequence YYSIMKKRYAFYHPLMKN. Residues 315-335 form a helical membrane-spanning segment; that stretch reads MILVAVLSVVSILVPVVFFIL. Topologically, residues 336–341 are extracellular; that stretch reads DISKPD. The chain crosses the membrane as a helical span at residues 342–362; the sequence is FAGWGDYVRWVGAAAASVIVW. Residues 363 to 778 lie on the Periplasmic side of the membrane; sequence EWVERIEALE…RSDSSTTPSP (416 aa). Disordered stretches follow at residues 394–499, 514–605, and 660–778; these read ASQS…DTTS, ELTS…DENS, and ELNH…TPSP. Basic and acidic residues predominate over residues 446–456; sequence HRTEPSSRNEP. The span at 457 to 466 shows a compositional bias: polar residues; that stretch reads NEGSSPVAET. Composition is skewed to basic and acidic residues over residues 588–605 and 661–675; these read FVTR…DENS and LNHS…EESR. A compositionally biased stretch (polar residues) spans 720–732; that stretch reads PIVTQGSFTNNRY. Positions 749-759 are enriched in low complexity; sequence ARAPSQPQSPS. Over residues 769–778 the composition is skewed to polar residues; it reads RSDSSTTPSP.

It belongs to the palH/RIM21 family.

Its subcellular location is the cell membrane. In terms of biological role, required for the proteolytic cleavage of the transcription factor pacc-1 in response to alkaline ambient pH. The chain is pH-response regulator protein palH/prr-4 (prr-4) from Neurospora crassa (strain ATCC 24698 / 74-OR23-1A / CBS 708.71 / DSM 1257 / FGSC 987).